The primary structure comprises 234 residues: Peptidase E (234 aa).

Catalysis depends on charge relay system residues S123, D138, and H160.

This sequence belongs to the peptidase S51 family.

It is found in the cytoplasm. The catalysed reaction is Dipeptidase E catalyzes the hydrolysis of dipeptides Asp-|-Xaa. It does not act on peptides with N-terminal Glu, Asn or Gln, nor does it cleave isoaspartyl peptides.. Functionally, hydrolyzes dipeptides containing N-terminal aspartate residues. May play a role in allowing the cell to use peptide aspartate to spare carbon otherwise required for the synthesis of the aspartate family of amino acids. The sequence is that of Peptidase E from Actinobacillus pleuropneumoniae serotype 7 (strain AP76).